A 195-amino-acid chain; its full sequence is Cyclin-dependent kinase inhibitor 7 (195 aa).

Basic and acidic residues predominate over residues 1-11 (MSETKPKRDSE). Disordered regions lie at residues 1 to 50 (MSET…SVSD), 61 to 80 (EEED…SSET), and 117 to 154 (SSEN…TQAE). 2 stretches are compositionally biased toward low complexity: residues 37–50 (SSSS…SVSD) and 68–80 (SSSI…SSET). T151 is modified (phosphothreonine; by KIN10).

The protein belongs to the CDI family. ICK/KRP subfamily. Specifically interacts with CDKA-1, but not with CDKB1-1. Interacts with CYCD4-1. Binds to FBL17. Ubiquitinated by SCF(FBL17). Ubiquitination leads to its subsequent degradation, thus controlling cell cycle progression. As to expression, expressed in flowers, in developing pollen, and at lower levels in roots and leaves.

The protein resides in the nucleus. The protein localises to the nucleoplasm. In terms of biological role, binds and inhibits CYCD2-1/CDKA-1 complex kinase activity. May target specifically CDKA-1. The polypeptide is Cyclin-dependent kinase inhibitor 7 (KRP7) (Arabidopsis thaliana (Mouse-ear cress)).